The sequence spans 215 residues: Nascent polypeptide-associated complex subunit alpha (215 aa).

The interval 1-81 is disordered; sequence MPGEATETVP…SEKKARKAMS (81 aa). A compositionally biased stretch (polar residues) spans 9 to 28; that stretch reads VPATEQELPQPQAETGSGTE. Over residues 29 to 42 the composition is skewed to acidic residues; the sequence is SDSDESVPELEEQD. Phosphoserine; by ILK1 is present on Ser-43. Positions 44–57 are enriched in low complexity; it reads TQATTQQAQLAAAA. The tract at residues 69 to 80 is required for DNA-binding; it reads QSRSEKKARKAM. The NAC-A/B domain occupies 70–135; that stretch reads SRSEKKARKA…AKIEDLSQQA (66 aa). The tract at residues 93–108 is RNA/DNA-binding; that stretch reads RVTIRKSKNILFVITK. Residue Ser-132 is modified to Phosphoserine. The residue at position 142 (Lys-142) is an N6-acetyllysine; alternate. A Glycyl lysine isopeptide (Lys-Gly) (interchain with G-Cter in SUMO2); alternate cross-link involves residue Lys-142. Position 159 is a phosphothreonine; by GSK3-beta (Thr-159). Phosphothreonine is present on Thr-161. Phosphoserine occurs at positions 166, 186, 191, and 203. The region spanning 176 to 213 is the UBA domain; it reads VEVKDIELVMSQANVSRAKAVRALKNNSNDIVNAIMEL.

The protein belongs to the NAC-alpha family. Part of the nascent polypeptide-associated complex (NAC), which is a heterodimer of NACA and BTF3 (via NAC-A/B domains). NAC associates with ribosomes through the BTF3/NACB subunit and contacts the ribosomal protein L23, which is positioned near the exiting site. Both subunits can contact nascent polypeptide chains. NACA may also form homodimers, and only this form binds DNA. Interacts with TBP and JUN. In terms of processing, phosphorylation of Ser-43 by ILK during cell adhesion may promote nuclear localization. Phosphorylation of Thr-159 by GSK3B may promote proteasome mediated degradation.

The protein resides in the cytoplasm. It is found in the nucleus. Functionally, prevents inappropriate targeting of non-secretory polypeptides to the endoplasmic reticulum (ER). Binds to nascent polypeptide chains as they emerge from the ribosome and blocks their interaction with the signal recognition particle (SRP), which normally targets nascent secretory peptides to the ER. Also reduces the inherent affinity of ribosomes for protein translocation sites in the ER membrane (M sites). May act as a specific coactivator for JUN, binding to DNA and stabilizing the interaction of JUN homodimers with target gene promoters. The polypeptide is Nascent polypeptide-associated complex subunit alpha (NACA) (Pongo abelii (Sumatran orangutan)).